An 860-amino-acid polypeptide reads, in one-letter code: Protein argonaute-3 (860 aa).

The region spanning 230 to 349 is the PAZ domain; sequence PVIQFMCEVL…LPLEVCNIVA (120 aa). In terms of domain architecture, Piwi spans 518–819; that stretch reads LIIVILPGKT…VAFRARYHLV (302 aa). Positions 530–567 are interaction with guide RNA; that stretch reads YAEVKRVGDTLLGMATQCVQVKNVVKTSPQTLSNLCLK. A divalent metal cation contacts are provided by Asp598, Glu638, and Asp670. The tract at residues 758 to 805 is interaction with guide RNA; that stretch reads QGTSRPSHYYVLWDDNCFTADEFQLLTYQLCHTYVRCTRSVSIPAPAY. His808 is a binding site for a divalent metal cation.

The protein belongs to the argonaute family. Ago subfamily.

The protein resides in the cytoplasm. Its subcellular location is the P-body. It carries out the reaction Endonucleolytic cleavage to 5'-phosphomonoester.. Its function is as follows. Required for RNA-mediated gene silencing (RNAi). Binds to short RNAs such as microRNAs (miRNAs) and represses the translation of mRNAs which are complementary to them. Possesses RNA slicer activity but only on select RNAs bearing 5'- and 3'-flanking sequences to the region of guide-target complementarity. This Danio rerio (Zebrafish) protein is Protein argonaute-3 (ago3).